A 219-amino-acid chain; its full sequence is 2-hydroxy-3-keto-5-methylthiopentenyl-1-phosphate phosphatase (219 aa).

The protein belongs to the HAD-like hydrolase superfamily. MtnX family.

The enzyme catalyses 2-hydroxy-5-methylsulfanyl-3-oxopent-1-enyl phosphate + H2O = 1,2-dihydroxy-5-(methylsulfanyl)pent-1-en-3-one + phosphate. It functions in the pathway amino-acid biosynthesis; L-methionine biosynthesis via salvage pathway; L-methionine from S-methyl-5-thio-alpha-D-ribose 1-phosphate: step 4/6. In terms of biological role, dephosphorylates 2-hydroxy-3-keto-5-methylthiopentenyl-1-phosphate (HK-MTPenyl-1-P) yielding 1,2-dihydroxy-3-keto-5-methylthiopentene (DHK-MTPene). The polypeptide is 2-hydroxy-3-keto-5-methylthiopentenyl-1-phosphate phosphatase (Bacillus cereus (strain AH187)).